The following is a 308-amino-acid chain: Cytochrome b (308 aa).

4 consecutive transmembrane segments (helical) span residues 1–21, 45–66, 81–101, and 146–166; these read FGSL…LLAM, WLIR…YLHI, WNIG…GYVL, and FFAF…VHLT. His51 and His65 together coordinate heme b. Heme b-binding residues include His150 and His164. His169 serves as a coordination point for a ubiquinone. 3 helical membrane-spanning segments follow: residues 194–214, 256–276, and 288–308; these read IKDL…ALFS, LGGV…PLLH, and LSQI…WVGS.

It belongs to the cytochrome b family. As to quaternary structure, the cytochrome bc1 complex contains 11 subunits: 3 respiratory subunits (MT-CYB, CYC1 and UQCRFS1), 2 core proteins (UQCRC1 and UQCRC2) and 6 low-molecular weight proteins (UQCRH/QCR6, UQCRB/QCR7, UQCRQ/QCR8, UQCR10/QCR9, UQCR11/QCR10 and a cleavage product of UQCRFS1). This cytochrome bc1 complex then forms a dimer. Requires heme b as cofactor.

The protein localises to the mitochondrion inner membrane. In terms of biological role, component of the ubiquinol-cytochrome c reductase complex (complex III or cytochrome b-c1 complex) that is part of the mitochondrial respiratory chain. The b-c1 complex mediates electron transfer from ubiquinol to cytochrome c. Contributes to the generation of a proton gradient across the mitochondrial membrane that is then used for ATP synthesis. The chain is Cytochrome b (MT-CYB) from Corvus corax (Common raven).